The chain runs to 483 residues: ATP-dependent RNA helicase DDX25 (483 aa).

Residues 61-74 (LAANSLLNKLIRQS) carry the Nuclear export signal motif. A Q motif motif is present at residues 97-125 (KTFEELRLKEELLKGIYAMGFNRPSKIQE). A Nuclear localization signal motif is present at residues 100 to 114 (EELRLKEELLKGIYA). One can recognise a Helicase ATP-binding domain in the interval 130-300 (MMLAHPPQNL…ERIIPDPNVI (171 aa)). 143–150 (SQSGTGKT) serves as a coordination point for ATP. The DEAD box signature appears at 247-250 (DEAD). Positions 311–478 (NIRQYYVLCG…QLDPEDMDEI (168 aa)) constitute a Helicase C-terminal domain.

It belongs to the DEAD box helicase family. Phosphorylated on threonine residues. The phosphorylated form is found in the cytoplasm but not in the nucleus.

The protein resides in the cytoplasm. It localises to the nucleus. It catalyses the reaction ATP + H2O = ADP + phosphate + H(+). In terms of biological role, ATP-dependent RNA helicase. Required for mRNA export and translation regulation during spermatid development. In Bos taurus (Bovine), this protein is ATP-dependent RNA helicase DDX25 (DDX25).